The chain runs to 452 residues: CCA-adding enzyme (452 aa).

ATP is bound by residues Ser54 and Arg57. The CTP site is built by Ser54 and Arg57. Residues Asp66, Asp68, and Asp117 each coordinate Mg(2+). The ATP site is built by His140, Lys160, and Tyr169. CTP contacts are provided by His140, Lys160, and Tyr169.

Belongs to the tRNA nucleotidyltransferase/poly(A) polymerase family. Archaeal CCA-adding enzyme subfamily. In terms of assembly, homodimer. Requires Mg(2+) as cofactor.

The catalysed reaction is a tRNA precursor + 2 CTP + ATP = a tRNA with a 3' CCA end + 3 diphosphate. The enzyme catalyses a tRNA with a 3' CCA end + 2 CTP + ATP = a tRNA with a 3' CCACCA end + 3 diphosphate. Its function is as follows. Catalyzes the addition and repair of the essential 3'-terminal CCA sequence in tRNAs without using a nucleic acid template. Adds these three nucleotides in the order of C, C, and A to the tRNA nucleotide-73, using CTP and ATP as substrates and producing inorganic pyrophosphate. tRNA 3'-terminal CCA addition is required both for tRNA processing and repair. Also involved in tRNA surveillance by mediating tandem CCA addition to generate a CCACCA at the 3' terminus of unstable tRNAs. While stable tRNAs receive only 3'-terminal CCA, unstable tRNAs are marked with CCACCA and rapidly degraded. The sequence is that of CCA-adding enzyme from Halobacterium salinarum (strain ATCC 29341 / DSM 671 / R1).